Here is a 215-residue protein sequence, read N- to C-terminus: Glutathione S-transferase D2 (215 aa).

In terms of domain architecture, GST N-terminal spans 1 to 80 (MDFYYMPGGG…YLVEKYGKDD (80 aa)). Residues 50–52 (HTI) and 64–66 (ESR) contribute to the glutathione site. The GST C-terminal domain maps to 86–212 (DPKKRAVINQ…MKALFDARKL (127 aa)).

The protein belongs to the GST superfamily. Delta family. In terms of assembly, homodimer.

The catalysed reaction is RX + glutathione = an S-substituted glutathione + a halide anion + H(+). In terms of biological role, conjugation of reduced glutathione to a wide number of exogenous and endogenous hydrophobic electrophiles. May be involved in detoxification. The sequence is that of Glutathione S-transferase D2 from Drosophila melanogaster (Fruit fly).